Reading from the N-terminus, the 311-residue chain is Solute carrier family 25 member 36-A (311 aa).

3 Solcar repeats span residues 4 to 108, 116 to 203, and 224 to 308; these read RDTL…SKEK, DSTQ…IKRK, and SDFV…VVYL. 6 consecutive transmembrane segments (helical) span residues 7–27, 41–57, 111–131, 180–200, 226–246, and 291–311; these read LVHL…TCPL, FYIS…ASVA, NVFD…AGFT, MSAS…YESI, FVGM…IAYP, and QIPN…LLNG.

This sequence belongs to the mitochondrial carrier (TC 2.A.29) family.

The protein resides in the mitochondrion inner membrane. The sequence is that of Solute carrier family 25 member 36-A (slc25a36a) from Danio rerio (Zebrafish).